We begin with the raw amino-acid sequence, 281 residues long: Probable endonuclease 4 (281 aa).

Residues histidine 69, histidine 109, glutamate 145, aspartate 179, histidine 182, histidine 216, aspartate 229, histidine 231, and glutamate 261 each contribute to the Zn(2+) site.

It belongs to the AP endonuclease 2 family. Zn(2+) serves as cofactor.

It catalyses the reaction Endonucleolytic cleavage to 5'-phosphooligonucleotide end-products.. Its function is as follows. Endonuclease IV plays a role in DNA repair. It cleaves phosphodiester bonds at apurinic or apyrimidinic (AP) sites, generating a 3'-hydroxyl group and a 5'-terminal sugar phosphate. In Chlorobaculum parvum (strain DSM 263 / NCIMB 8327) (Chlorobium vibrioforme subsp. thiosulfatophilum), this protein is Probable endonuclease 4.